A 335-amino-acid chain; its full sequence is GTPase Obg (335 aa).

An Obg domain is found at 1 to 158 (MFVDQITLEL…RLVELELKLI (158 aa)). Positions 159-334 (ADIGLVGFPN…LYDLFKSKLS (176 aa)) constitute an OBG-type G domain. GTP-binding positions include 165 to 172 (GFPNAGKS), 190 to 194 (FTTLH), 215 to 218 (DIPG), 285 to 288 (NKID), and 315 to 317 (SGL). Positions 172 and 192 each coordinate Mg(2+).

This sequence belongs to the TRAFAC class OBG-HflX-like GTPase superfamily. OBG GTPase family. Monomer. Mg(2+) is required as a cofactor.

The protein localises to the cytoplasm. Its function is as follows. An essential GTPase which binds GTP, GDP and possibly (p)ppGpp with moderate affinity, with high nucleotide exchange rates and a fairly low GTP hydrolysis rate. Plays a role in control of the cell cycle, stress response, ribosome biogenesis and in those bacteria that undergo differentiation, in morphogenesis control. In Chlamydia trachomatis serovar A (strain ATCC VR-571B / DSM 19440 / HAR-13), this protein is GTPase Obg.